A 195-amino-acid chain; its full sequence is Imidazoleglycerol-phosphate dehydratase (195 aa).

It belongs to the imidazoleglycerol-phosphate dehydratase family.

It localises to the cytoplasm. It carries out the reaction D-erythro-1-(imidazol-4-yl)glycerol 3-phosphate = 3-(imidazol-4-yl)-2-oxopropyl phosphate + H2O. It participates in amino-acid biosynthesis; L-histidine biosynthesis; L-histidine from 5-phospho-alpha-D-ribose 1-diphosphate: step 6/9. The protein is Imidazoleglycerol-phosphate dehydratase of Dinoroseobacter shibae (strain DSM 16493 / NCIMB 14021 / DFL 12).